We begin with the raw amino-acid sequence, 434 residues long: UDP-glucuronate 4-epimerase 2 (434 aa).

The next 2 membrane-spanning stretches (helical) occupy residues 32-52 (SVAK…IFFY) and 91-111 (GVSV…SAAL). Position 93–124 (93–124 (SVLVTGAAGFVGTHVSAALKRRGDGVLGLDNF)) interacts with NAD(+). Catalysis depends on tyrosine 243, which acts as the Proton acceptor.

It belongs to the NAD(P)-dependent epimerase/dehydratase family. Homodimer. In roots, leaves, siliques, flowers, pollen and stems.

The protein localises to the golgi apparatus. Its subcellular location is the golgi stack membrane. It catalyses the reaction UDP-alpha-D-glucuronate = UDP-alpha-D-galacturonate. Involved in the synthesis of the negatively charged monosaccharide that forms the backbone of pectic cell wall components. This is UDP-glucuronate 4-epimerase 2 (GAE2) from Arabidopsis thaliana (Mouse-ear cress).